The following is a 164-amino-acid chain: Small ribosomal subunit protein uS5 (164 aa).

In terms of domain architecture, S5 DRBM spans Y9 to I72.

Belongs to the universal ribosomal protein uS5 family. In terms of assembly, part of the 30S ribosomal subunit. Contacts proteins S4 and S8.

With S4 and S12 plays an important role in translational accuracy. In terms of biological role, located at the back of the 30S subunit body where it stabilizes the conformation of the head with respect to the body. The polypeptide is Small ribosomal subunit protein uS5 (Fusobacterium nucleatum subsp. nucleatum (strain ATCC 25586 / DSM 15643 / BCRC 10681 / CIP 101130 / JCM 8532 / KCTC 2640 / LMG 13131 / VPI 4355)).